The following is a 98-amino-acid chain: NADH-ubiquinone oxidoreductase chain 4L (98 aa).

3 consecutive transmembrane segments (helical) span residues 1 to 21 (MSPMYFSFSSAFMLGLMGLAF), 26 to 46 (LLSALLCLEGMMLTLFVATAT), and 58 to 78 (ILPMILLTFSACEASAGLAIL).

This sequence belongs to the complex I subunit 4L family.

The protein localises to the mitochondrion membrane. It catalyses the reaction a ubiquinone + NADH + 5 H(+)(in) = a ubiquinol + NAD(+) + 4 H(+)(out). In terms of biological role, core subunit of the mitochondrial membrane respiratory chain NADH dehydrogenase (Complex I) which catalyzes electron transfer from NADH through the respiratory chain, using ubiquinone as an electron acceptor. Part of the enzyme membrane arm which is embedded in the lipid bilayer and involved in proton translocation. This is NADH-ubiquinone oxidoreductase chain 4L (MT-ND4L) from Scyliorhinus canicula (Small-spotted catshark).